The primary structure comprises 447 residues: Na(+)-translocating NADH-quinone reductase subunit A (447 aa).

This sequence belongs to the NqrA family. In terms of assembly, composed of six subunits; NqrA, NqrB, NqrC, NqrD, NqrE and NqrF.

The catalysed reaction is a ubiquinone + n Na(+)(in) + NADH + H(+) = a ubiquinol + n Na(+)(out) + NAD(+). Its function is as follows. NQR complex catalyzes the reduction of ubiquinone-1 to ubiquinol by two successive reactions, coupled with the transport of Na(+) ions from the cytoplasm to the periplasm. NqrA to NqrE are probably involved in the second step, the conversion of ubisemiquinone to ubiquinol. This Neisseria gonorrhoeae (strain NCCP11945) protein is Na(+)-translocating NADH-quinone reductase subunit A.